Consider the following 253-residue polypeptide: Negative modulator of initiation of replication (253 aa).

Residues 66–112 are disordered; sequence SNQEQQTGHGHAGEPSAVQTPESNDYAKAQPHSSGYQPGQLEGHKSE. Residues 154–155 form an interaction with DNA region; it reads AV.

It belongs to the SeqA family. As to quaternary structure, homodimer. Polymerizes to form helical filaments.

The protein resides in the cytoplasm. Negative regulator of replication initiation, which contributes to regulation of DNA replication and ensures that replication initiation occurs exactly once per chromosome per cell cycle. Binds to pairs of hemimethylated GATC sequences in the oriC region, thus preventing assembly of replication proteins and re-initiation at newly replicated origins. Repression is relieved when the region becomes fully methylated. This chain is Negative modulator of initiation of replication, found in Shewanella denitrificans (strain OS217 / ATCC BAA-1090 / DSM 15013).